The chain runs to 686 residues: Pentatricopeptide repeat-containing protein 1, mitochondrial (686 aa).

Residues 55–67 (RMSSLCSDSSTPV) are compositionally biased toward polar residues. The interval 55–79 (RMSSLCSDSSTPVAPQEEEEEESFG) is disordered. PPR repeat units follow at residues 124–160 (TPYW…RLQP), 161–195 (LECN…DLEP), 196–234 (SDAT…NFQL), 235–269 (NLKT…GHAV), and 270–306 (TEET…GIKP). The segment at 383-407 (KLEGPPAFPEARETSRTQPEVETKA) is disordered. A compositionally biased stretch (basic and acidic residues) spans 392–407 (EARETSRTQPEVETKA). 2 PPR repeats span residues 508–542 (DITF…GIVP) and 575–609 (NTHI…SVPV).

It belongs to the PTCD1 family. In terms of assembly, associates with mitochondrial leucine tRNAs. Interacts with ELAC2.

Its subcellular location is the mitochondrion matrix. Mitochondrial protein implicated in negative regulation of leucine tRNA levels, as well as negative regulation of mitochondria-encoded proteins and COX activity. Also affects the 3'-processing of mitochondrial tRNAs. In Rattus norvegicus (Rat), this protein is Pentatricopeptide repeat-containing protein 1, mitochondrial (Ptcd1).